The primary structure comprises 344 residues: Dihydroorotate dehydrogenase (quinone) (344 aa).

FMN is bound by residues 64 to 68 (AGLDK) and Thr-88. Position 68 (Lys-68) interacts with substrate. 113–117 (NRMGF) is a substrate binding site. Positions 144 and 177 each coordinate FMN. Asn-177 provides a ligand contact to substrate. The active-site Nucleophile is Ser-180. Asn-182 contacts substrate. FMN contacts are provided by Lys-222 and Thr-250. A substrate-binding site is contributed by 251-252 (NT). Residues Gly-273, Gly-302, and 323-324 (YS) each bind FMN.

It belongs to the dihydroorotate dehydrogenase family. Type 2 subfamily. As to quaternary structure, monomer. Requires FMN as cofactor.

It is found in the cell membrane. The catalysed reaction is (S)-dihydroorotate + a quinone = orotate + a quinol. It functions in the pathway pyrimidine metabolism; UMP biosynthesis via de novo pathway; orotate from (S)-dihydroorotate (quinone route): step 1/1. Catalyzes the conversion of dihydroorotate to orotate with quinone as electron acceptor. The protein is Dihydroorotate dehydrogenase (quinone) of Polynucleobacter asymbioticus (strain DSM 18221 / CIP 109841 / QLW-P1DMWA-1) (Polynucleobacter necessarius subsp. asymbioticus).